Reading from the N-terminus, the 508-residue chain is ATP synthase subunit alpha, mitochondrial (508 aa).

Glycine 171–threonine 178 contacts ATP.

It belongs to the ATPase alpha/beta chains family. F-type ATPases have 2 components, CF(1) - the catalytic core - and CF(0) - the membrane proton channel. CF(1) has five subunits: alpha(3), beta(3), gamma(1), delta(1), epsilon(1). CF(0) has three main subunits: a, b and c.

The protein localises to the mitochondrion. It is found in the mitochondrion inner membrane. In terms of biological role, mitochondrial membrane ATP synthase (F(1)F(0) ATP synthase or Complex V) produces ATP from ADP in the presence of a proton gradient across the membrane which is generated by electron transport complexes of the respiratory chain. F-type ATPases consist of two structural domains, F(1) - containing the extramembraneous catalytic core, and F(0) - containing the membrane proton channel, linked together by a central stalk and a peripheral stalk. During catalysis, ATP synthesis in the catalytic domain of F(1) is coupled via a rotary mechanism of the central stalk subunits to proton translocation. Subunits alpha and beta form the catalytic core in F(1). Rotation of the central stalk against the surrounding alpha(3)beta(3) subunits leads to hydrolysis of ATP in three separate catalytic sites on the beta subunits. Subunit alpha does not bear the catalytic high-affinity ATP-binding sites. This is ATP synthase subunit alpha, mitochondrial (ATPA) from Zea mays (Maize).